Consider the following 341-residue polypeptide: Tetraacyldisaccharide 4'-kinase (341 aa).

64 to 71 (AVGGSGKT) contributes to the ATP binding site.

This sequence belongs to the LpxK family.

The enzyme catalyses a lipid A disaccharide + ATP = a lipid IVA + ADP + H(+). The protein operates within glycolipid biosynthesis; lipid IV(A) biosynthesis; lipid IV(A) from (3R)-3-hydroxytetradecanoyl-[acyl-carrier-protein] and UDP-N-acetyl-alpha-D-glucosamine: step 6/6. Functionally, transfers the gamma-phosphate of ATP to the 4'-position of a tetraacyldisaccharide 1-phosphate intermediate (termed DS-1-P) to form tetraacyldisaccharide 1,4'-bis-phosphate (lipid IVA). The sequence is that of Tetraacyldisaccharide 4'-kinase from Azoarcus sp. (strain BH72).